The following is an 877-amino-acid chain: Protein P (877 aa).

A terminal protein domain (TP) region spans residues 1 to 183 (MHPFSQLFRN…GKPYSWGHRQ (183 aa)). The segment at 184-382 (LEQHNGQQHE…YCLHHIVSSL (199 aa)) is spacer. Over residues 185-198 (EQHNGQQHESHLQS) the composition is skewed to basic and acidic residues. Residues 185–347 (EQHNGQQHES…PSSSGLCGGT (163 aa)) are disordered. Residues 233–242 (FGESQKSART) are compositionally biased toward polar residues. A compositionally biased stretch (low complexity) spans 267–281 (QQGSSQVSSPRSKSS). 2 stretches are compositionally biased toward polar residues: residues 282-302 (NFRNQTQANHSSWNQRHPTWY) and 338-347 (PSSSGLCGGT). Residues 383–723 (EDWGPCTISG…YAELWPVARQ (341 aa)) are polymerase/reverse transcriptase domain (RT). Residues 393 to 634 (DVTIRSPRTP…HHLHFMGYVI (242 aa)) form the Reverse transcriptase domain. Positions 465, 585, and 586 each coordinate Mg(2+).

Belongs to the hepadnaviridae P protein family.

The enzyme catalyses DNA(n) + a 2'-deoxyribonucleoside 5'-triphosphate = DNA(n+1) + diphosphate. It catalyses the reaction Endonucleolytic cleavage to 5'-phosphomonoester.. With respect to regulation, activated by host HSP70 and HSP40 in vitro to be able to bind the epsilon loop of the pgRNA. Because deletion of the RNase H region renders the protein partly chaperone-independent, the chaperones may be needed indirectly to relieve occlusion of the RNA-binding site by this domain. Inhibited by several reverse-transcriptase inhibitors: Lamivudine, Adefovir and Entecavir. Multifunctional enzyme that converts the viral RNA genome into dsDNA in viral cytoplasmic capsids. This enzyme displays a DNA polymerase activity that can copy either DNA or RNA templates, and a ribonuclease H (RNase H) activity that cleaves the RNA strand of RNA-DNA heteroduplexes in a partially processive 3'- to 5'-endonucleasic mode. Neo-synthesized pregenomic RNA (pgRNA) are encapsidated together with the P protein, and reverse-transcribed inside the nucleocapsid. Initiation of reverse-transcription occurs first by binding the epsilon loop on the pgRNA genome, and is initiated by protein priming, thereby the 5'-end of (-)DNA is covalently linked to P protein. Partial (+)DNA is synthesized from the (-)DNA template and generates the relaxed circular DNA (RC-DNA) genome. After budding and infection, the RC-DNA migrates in the nucleus, and is converted into a plasmid-like covalently closed circular DNA (cccDNA). The activity of P protein does not seem to be necessary for cccDNA generation, and is presumably released from (+)DNA by host nuclear DNA repair machinery. In Arctic squirrel hepatitis virus (ASHV), this protein is Protein P.